A 195-amino-acid chain; its full sequence is Putative nucleotidase BH1399 (195 aa).

It belongs to the 5'(3')-deoxyribonucleotidase family.

The chain is Putative nucleotidase BH1399 from Halalkalibacterium halodurans (strain ATCC BAA-125 / DSM 18197 / FERM 7344 / JCM 9153 / C-125) (Bacillus halodurans).